The sequence spans 36 residues: Photosystem I reaction center subunit VIII (36 aa).

The helical transmembrane segment at 7–29 threads the bilayer; sequence PSILVPLVGILLPAVTMASLFLY.

The protein belongs to the PsaI family.

Its subcellular location is the plastid. The protein resides in the chloroplast thylakoid membrane. In terms of biological role, may help in the organization of the PsaL subunit. The chain is Photosystem I reaction center subunit VIII from Adiantum capillus-veneris (Maidenhair fern).